The following is a 162-amino-acid chain: Shikimate kinase (162 aa).

An ATP-binding site is contributed by 10-15 (GAGKST). A Mg(2+)-binding site is contributed by Ser14. The substrate site is built by Asp28, Arg52, and Gly73. An ATP-binding site is contributed by Arg113. Residue Arg129 coordinates substrate.

This sequence belongs to the shikimate kinase family. As to quaternary structure, monomer. Requires Mg(2+) as cofactor.

The protein resides in the cytoplasm. The enzyme catalyses shikimate + ATP = 3-phosphoshikimate + ADP + H(+). It participates in metabolic intermediate biosynthesis; chorismate biosynthesis; chorismate from D-erythrose 4-phosphate and phosphoenolpyruvate: step 5/7. In terms of biological role, catalyzes the specific phosphorylation of the 3-hydroxyl group of shikimic acid using ATP as a cosubstrate. This is Shikimate kinase from Lactococcus lactis subsp. lactis (strain IL1403) (Streptococcus lactis).